A 485-amino-acid polypeptide reads, in one-letter code: Alginate biosynthesis protein AlgA (485 aa).

This sequence belongs to the mannose-6-phosphate isomerase type 2 family. Monomer. Requires Co(2+) as cofactor.

It carries out the reaction D-mannose 6-phosphate = D-fructose 6-phosphate. The catalysed reaction is alpha-D-mannose 1-phosphate + GTP + H(+) = GDP-alpha-D-mannose + diphosphate. Its pathway is nucleotide-sugar biosynthesis; GDP-alpha-D-mannose biosynthesis; GDP-alpha-D-mannose from alpha-D-mannose 1-phosphate (GTP route): step 1/1. It participates in nucleotide-sugar biosynthesis; GDP-alpha-D-mannose biosynthesis; alpha-D-mannose 1-phosphate from D-fructose 6-phosphate: step 1/2. In terms of biological role, produces a precursor for alginate polymerization. The alginate layer provides a protective barrier against host immune defenses and antibiotics. The chain is Alginate biosynthesis protein AlgA (algA) from Pseudomonas putida (strain ATCC 47054 / DSM 6125 / CFBP 8728 / NCIMB 11950 / KT2440).